Consider the following 160-residue polypeptide: Glyoxalase domain-containing protein 5 (160 aa).

One can recognise a VOC domain in the interval 33-153 (RLDHLVLTVR…DHNLIEVSNY (121 aa)).

This sequence belongs to the glyoxalase I family.

This Xenopus laevis (African clawed frog) protein is Glyoxalase domain-containing protein 5 (glod5).